A 301-amino-acid chain; its full sequence is Cilia- and flagella-associated protein 161 (301 aa).

Residues 269–301 (GNPRDASSSMLDLPKPPTEDTRAMEQAMGLDTQ) are disordered.

Microtubule inner protein component of sperm flagellar doublet microtubules. As to expression, expressed in airway epithelial cells.

It is found in the cytoplasm. Its subcellular location is the cytoskeleton. The protein resides in the cilium axoneme. It localises to the flagellum axoneme. Functionally, microtubule inner protein (MIP) part of the dynein-decorated doublet microtubules (DMTs) in cilia axoneme, which is required for motile cilia beating. This is Cilia- and flagella-associated protein 161 from Homo sapiens (Human).